The primary structure comprises 243 residues: Ubiquinone/menaquinone biosynthesis C-methyltransferase UbiE (243 aa).

S-adenosyl-L-methionine is bound by residues threonine 69, aspartate 90, and 116–117 (DA).

This sequence belongs to the class I-like SAM-binding methyltransferase superfamily. MenG/UbiE family.

It catalyses the reaction a 2-demethylmenaquinol + S-adenosyl-L-methionine = a menaquinol + S-adenosyl-L-homocysteine + H(+). The catalysed reaction is a 2-methoxy-6-(all-trans-polyprenyl)benzene-1,4-diol + S-adenosyl-L-methionine = a 5-methoxy-2-methyl-3-(all-trans-polyprenyl)benzene-1,4-diol + S-adenosyl-L-homocysteine + H(+). The protein operates within quinol/quinone metabolism; menaquinone biosynthesis; menaquinol from 1,4-dihydroxy-2-naphthoate: step 2/2. It participates in cofactor biosynthesis; ubiquinone biosynthesis. Functionally, methyltransferase required for the conversion of demethylmenaquinol (DMKH2) to menaquinol (MKH2) and the conversion of 2-polyprenyl-6-methoxy-1,4-benzoquinol (DDMQH2) to 2-polyprenyl-3-methyl-6-methoxy-1,4-benzoquinol (DMQH2). This chain is Ubiquinone/menaquinone biosynthesis C-methyltransferase UbiE, found in Cupriavidus metallidurans (strain ATCC 43123 / DSM 2839 / NBRC 102507 / CH34) (Ralstonia metallidurans).